The chain runs to 915 residues: MAAVLEGQEPEETAAAAEDAATSTLEAVDAGPGAPFLPAGNQLNLDLRPGGCHRLQYLCSQQPPQLLQVEFLRLSTHEDPQLLDDTLAKVPWSLLRLRSLVLKGGQSRGALGACLHGTLTTLPAGLSDLACLAHLDLSFNRLETLPTCVPELHGLDALLLSHNHLSELPEALGALPALTFLTVTHNRLERLPLTLGSLSTLQRLDLSENLLDTIPSEIGNLRSLSELNLASNRLQSLPASLAGLRSLRLLVLHSNLLTSVPTGLVHLPLITRLDLRDNRLRDLPAELLDAPFVRLQGNPLGEASPAPPSPPDISQVPEMPRLLLTSDLDSFLVTPHGCSVTLACGVRLQFPAGATTTPVTIHYRLWLPEPGLVSLGPHDFLLSSVLELQPHGVAFQQDVSLWLLFVPPRVRRCREVVVRTRSNNTWNDLETQLEEEAPKRLWARCQVPHFSWFLVVLRPVSNTCLLPPEGALLCSSGHPGVRVTFPPGVTEEPRQVSMQVVHMAGLELRTLLEESEASVSPLLCLSQSGPPSFLQPVTVQLPLPPGVTGFSLDRSHLHLLYRTPLTTTWDDITTQVALEFTHLYARFQVTHFSWYWLWYTTKTCVGGLARKAWERLRLHRVNLIALQRRRDPEQVLLQCLPRNKVDATLSRLLVRYRGPEPSETVEMFEGEKFFAAFERGIDVDADRPDCVDGRICFVFYSHLKNVKEVYITTALDREAQDVRGQVSFYRGSLPVEVPAEAEAARQRKGTDALWMATLPIKLPRLRGAQGSGQGTDFSLMPLNLGDAETGFLTQSNLLSVASRLGPDWPAVALHLGMPYHKLQRIRHEFRDDLDGQVRHMLFSWAERQTGQPGAVGHLVQALEQSDRRDVAEEVRAILELGRHKYQDSIRRTGLAPEDSTLPGTSASQTPESAQA.

The residue at position 2 (alanine 2) is an N-acetylalanine. 7 LRR repeats span residues 131–152 (CLAH…VPEL), 154–176 (GLDA…GALP), 177–199 (ALTF…GSLS), 200–221 (TLQR…IGNL), 223–245 (SLSE…AGLR), 246–268 (SLRL…VHLP), and 269–290 (LITR…LLDA). The residue at position 304 (serine 304) is a Phosphoserine. ZU5 domains are found at residues 327–459 (DLDS…VLRP) and 460–601 (VSNT…WYTT). Peptidase S68 stretches follow at residues 428–457 (DLET…LVVL) and 571–599 (DITT…WLWY). Catalysis depends on residues histidine 449, serine 451, histidine 591, and serine 593. The UPA domain stretch occupies residues 585-721 (ARFQVTHFSW…TTALDREAQD (137 aa)). The region spanning 793–878 (TQSNLLSVAS…DVAEEVRAIL (86 aa)) is the Death domain. The segment at 888 to 915 (SIRRTGLAPEDSTLPGTSASQTPESAQA) is disordered. Polar residues predominate over residues 901–915 (LPGTSASQTPESAQA).

As to quaternary structure, forms a complex named the PIDDosome with CASP2 and CRADD. Forms a complex with IKBKG and RIPK1. Interacts with FADD and MADD. Post-translationally, undergoes autoproteolytic processing whose extent either directs cells towards survival or apoptotic pathways. Autoproteolytically cleaved into two main fragments PIDD-N and PIDD-C. PIDD-C can be further processed into PIDD-CC, a processing which is enhanced by DNA damage. The cleavage producing PIDD-C is required for translocation of PIDD1 to the nucleus upon DNA damage and activation of NF-kappa-B. PIDD-CC mediates the interaction with CRADD and the cleavage producing PIDD-CC is required for the activation of CASP2. PIDD-N remains associated with PIDD-C and PIDD-CC after cleavage. As to expression, ubiquitous.

Its subcellular location is the cytoplasm. It localises to the nucleus. In terms of biological role, component of the DNA damage/stress response pathway that functions downstream of p53/TP53 and can either promote cell survival or apoptosis. Associated with CRADD and the CASP2 caspase, it forms the PIDDosome a complex that activates CASP2 and triggers apoptosis. Associated with IKBKG and RIPK1, it enhances sumoylation and ubiquitination of IKBKG which is important for activation of the transcription factor NF-kappa-B. This is p53-induced death domain-containing protein 1 from Mus musculus (Mouse).